The chain runs to 358 residues: NADH-quinone oxidoreductase subunit H (358 aa).

A run of 8 helical transmembrane segments spans residues 30–50 (IAVG…LIYM), 96–116 (FLYN…FACI), 129–149 (VGVF…LLAG), 168–188 (IISY…LMGT), 201–221 (GWFI…YLIA), 265–285 (FIVA…LHII), 297–317 (IPGF…LMWI), and 336–356 (YLVP…AFGF).

It belongs to the complex I subunit 1 family. In terms of assembly, NDH-1 is composed of 14 different subunits. Subunits NuoA, H, J, K, L, M, N constitute the membrane sector of the complex.

It is found in the cell inner membrane. It carries out the reaction a quinone + NADH + 5 H(+)(in) = a quinol + NAD(+) + 4 H(+)(out). Its function is as follows. NDH-1 shuttles electrons from NADH, via FMN and iron-sulfur (Fe-S) centers, to quinones in the respiratory chain. The immediate electron acceptor for the enzyme in this species is believed to be ubiquinone. Couples the redox reaction to proton translocation (for every two electrons transferred, four hydrogen ions are translocated across the cytoplasmic membrane), and thus conserves the redox energy in a proton gradient. This subunit may bind ubiquinone. The protein is NADH-quinone oxidoreductase subunit H of Bacteroides thetaiotaomicron (strain ATCC 29148 / DSM 2079 / JCM 5827 / CCUG 10774 / NCTC 10582 / VPI-5482 / E50).